The primary structure comprises 287 residues: 4,4'-diapophytoene synthase (287 aa).

(2E,6E)-farnesyl diphosphate-binding positions include 18–21, tyrosine 41, and arginine 45; that span reads HSKS. The Mg(2+) site is built by aspartate 48 and aspartate 52. Glutamine 165 is a binding site for (2E,6E)-farnesyl diphosphate. Asparagine 168 serves as a coordination point for Mg(2+). Arginine 171 provides a ligand contact to (2E,6E)-farnesyl diphosphate. Aspartate 172 is a binding site for Mg(2+). Tyrosine 248 lines the (2E,6E)-farnesyl diphosphate pocket.

Belongs to the phytoene/squalene synthase family. CrtM subfamily. The cofactor is Mg(2+).

The enzyme catalyses 2 (2E,6E)-farnesyl diphosphate = 15-cis-4,4'-diapophytoene + 2 diphosphate. The protein operates within carotenoid biosynthesis; staphyloxanthin biosynthesis; staphyloxanthin from farnesyl diphosphate: step 1/5. Involved in the biosynthesis of the yellow-orange carotenoid staphyloxanthin, which plays a role in the virulence via its protective function against oxidative stress. Catalyzes the head-to-head condensation of two molecules of farnesyl diphosphate (FPP) into the colorless C(30) carotenoid 4,4'-diapophytoene (dehydrosqualene). The polypeptide is 4,4'-diapophytoene synthase (Staphylococcus aureus (strain NCTC 8325 / PS 47)).